Reading from the N-terminus, the 173-residue chain is Co-chaperone protein HscB (173 aa).

One can recognise a J domain in the interval 2–74 (DYFTLFGLPA…LKRAEYMLSL (73 aa)).

This sequence belongs to the HscB family. Interacts with HscA and stimulates its ATPase activity. Interacts with IscU.

Functionally, co-chaperone involved in the maturation of iron-sulfur cluster-containing proteins. Seems to help targeting proteins to be folded toward HscA. This chain is Co-chaperone protein HscB, found in Photorhabdus laumondii subsp. laumondii (strain DSM 15139 / CIP 105565 / TT01) (Photorhabdus luminescens subsp. laumondii).